Reading from the N-terminus, the 382-residue chain is Pyruvate dehydrogenase E1 component subunit beta, mitochondrial (382 aa).

The transit peptide at 1 to 46 directs the protein to the mitochondrion; it reads MSRFLRPAFRLATTATRASTIRPTPSSLITKAAAVPTTRLLQKRSY. Glu112 contacts thiamine diphosphate. Residues Ile165, Ala213, Ile214, Asp216, and Asn218 each contribute to the K(+) site.

As to quaternary structure, eukaryotic pyruvate dehydrogenase (PDH) complexes are organized as a core consisting of the oligomeric dihydrolipoamide acetyl-transferase (E2), around which are arranged multiple copies of pyruvate dehydrogenase (E1), dihydrolipoamide dehydrogenase (E3) and protein X (E3BP) bound by non-covalent bonds. The Chaetomium thermophilum PDH complex contains 60 E2 units, 12 E3BP units, about 20 E1 units, and 12 or more E3 units. The units are organized in 1 E2 60-mer, 4 E3BP trimers, about 20 E1 tetramers, and a maximum of 12 E3 dimers. Pyruvate dehydrogenase (E1) is active as a tetramer of 2 alpha and 2 beta subunits. The E3BP trimers are bound inside the icosahedral core with tetrahedral symmetry. Requires thiamine diphosphate as cofactor.

The protein localises to the mitochondrion. It carries out the reaction N(6)-[(R)-lipoyl]-L-lysyl-[protein] + pyruvate + H(+) = N(6)-[(R)-S(8)-acetyldihydrolipoyl]-L-lysyl-[protein] + CO2. The 10-megadalton pyruvate dehydrogenase complex contains multiple copies of three enzymatic components: pyruvate dehydrogenase (E1), dihydrolipoamide acetyltransferase (E2) and lipoamide dehydrogenase (E3) and catalyzes the overall oxidative decarboxylation of pyruvate to form acetyl-CoA and CO(2). Within the complex, pyruvate and thiamine pyrophosphate (TPP or vitamin B1) are bound by pyruvate dehydrogenase E1 subunits alpha and beta and pyruvate is decarboxylated leading to the 2-carbon hydrohyethyl bound to TPP. The E2 component contains covalently-bound lipoyl cofactors and transfers the hydroxyethyl group from TPP to an oxidized form of covalently bound lipoamide, and the resulting acetyl group is then transferred to free coenzyme A to form acetyl-CoA and reduced dihydrolipoamide-E2. Finally, the flavoprotein dihydrolipoamide dehydrogenase (E3) re-oxidizes the lipoyl group of dihydrolipoamide-E2 to form lipoamide-E2 and NADH. A fourth subunit, E3BP, is responsible for tethering E3 in proximity to the core, forming the entire metabolon. The protein is Pyruvate dehydrogenase E1 component subunit beta, mitochondrial of Chaetomium thermophilum (strain DSM 1495 / CBS 144.50 / IMI 039719) (Thermochaetoides thermophila).